Here is a 147-residue protein sequence, read N- to C-terminus: Mannitol-specific cryptic phosphotransferase enzyme IIA component (147 aa).

The PTS EIIA type-2 domain occupies 5 to 147 (DYFPESSISV…KQLADIISRG (143 aa)). His-67 acts as the Tele-phosphohistidine intermediate in catalysis. A Phosphohistidine; by HPr modification is found at His-67.

The protein localises to the cytoplasm. The phosphoenolpyruvate-dependent sugar phosphotransferase system (sugar PTS), a major carbohydrate active transport system, catalyzes the phosphorylation of incoming sugar substrates concomitantly with their translocation across the cell membrane. The enzyme II CmtAB PTS system is involved in D-mannitol transport. The chain is Mannitol-specific cryptic phosphotransferase enzyme IIA component (cmtB) from Escherichia coli O157:H7.